The following is a 330-amino-acid chain: Glycerol-3-phosphate dehydrogenase [NAD(P)+] (330 aa).

Residues serine 11, phenylalanine 12, arginine 32, and lysine 106 each coordinate NADPH. Positions 106, 133, and 135 each coordinate sn-glycerol 3-phosphate. Alanine 137 contacts NADPH. Residues lysine 188, aspartate 241, serine 251, arginine 252, and asparagine 253 each contribute to the sn-glycerol 3-phosphate site. Residue lysine 188 is the Proton acceptor of the active site. Residue arginine 252 coordinates NADPH. Valine 276 and glutamate 278 together coordinate NADPH.

It belongs to the NAD-dependent glycerol-3-phosphate dehydrogenase family.

The protein resides in the cytoplasm. The enzyme catalyses sn-glycerol 3-phosphate + NAD(+) = dihydroxyacetone phosphate + NADH + H(+). The catalysed reaction is sn-glycerol 3-phosphate + NADP(+) = dihydroxyacetone phosphate + NADPH + H(+). Its pathway is membrane lipid metabolism; glycerophospholipid metabolism. Functionally, catalyzes the reduction of the glycolytic intermediate dihydroxyacetone phosphate (DHAP) to sn-glycerol 3-phosphate (G3P), the key precursor for phospholipid synthesis. The polypeptide is Glycerol-3-phosphate dehydrogenase [NAD(P)+] (Clostridium botulinum (strain Eklund 17B / Type B)).